The following is a 183-amino-acid chain: Mitochondrial import inner membrane translocase subunit tim17 (183 aa).

Helical transmembrane passes span 13–33 (AGGA…GLGF), 57–77 (GGNF…LSYI), and 107–127 (VQAA…QHMM). Residues 131–141 (MQAQQEEMTQQ) are compositionally biased toward polar residues. The disordered stretch occupies residues 131-183 (MQAQQEEMTQQHLEERKRYEEERKQREGERKKLNENGKSKKNKQQQNGENDLD). The segment covering 142–168 (HLEERKRYEEERKQREGERKKLNENGK) has biased composition (basic and acidic residues). The segment covering 174–183 (QQQNGENDLD) has biased composition (low complexity).

Belongs to the Tim17/Tim22/Tim23 family.

It is found in the mitochondrion inner membrane. Its function is as follows. May be involved in the translocation of transit peptide-containing proteins across the mitochondrial inner membrane. The sequence is that of Mitochondrial import inner membrane translocase subunit tim17 (timm17) from Dictyostelium discoideum (Social amoeba).